Here is a 162-residue protein sequence, read N- to C-terminus: UPF0303 protein RL3365 (162 aa).

The protein belongs to the UPF0303 family.

The sequence is that of UPF0303 protein RL3365 from Rhizobium johnstonii (strain DSM 114642 / LMG 32736 / 3841) (Rhizobium leguminosarum bv. viciae).